We begin with the raw amino-acid sequence, 651 residues long: Tudor domain-containing protein 3 (651 aa).

Residues 193 to 233 form the UBA domain; that stretch reads LVDEKALKHITEMGFSKEASRQALMDNGNNLEAALNVLLTS. Disordered stretches follow at residues 234–271, 287–369, and 381–450; these read NKQK…SAPS, EEPK…VSEV, and YSRY…TSIP. Residue Ser-256 is modified to Phosphoserine. Positions 291–312 are enriched in polar residues; that stretch reads SQPQQLHQGQYRSSNTEQNGVK. The segment covering 313 to 338 has biased composition (basic and acidic residues); it reads DNNHLRHPPRNDTRQPRNEKPPRFQR. Ser-345 is modified (phosphoserine). Lys-470 is covalently cross-linked (Glycyl lysine isopeptide (Lys-Gly) (interchain with G-Cter in SUMO2)). Positions 555 to 615 constitute a Tudor domain; sequence MWKPGDECFA…KPIQTEAWEE (61 aa). The segment covering 624-633 has biased composition (basic and acidic residues); it reads EFRRGGDGQP. Residues 624–651 are disordered; sequence EFRRGGDGQPRRSTRPTQQFYQPPRARN. The tract at residues 631–651 is EBM motif; may mediate interaction with the EJC; sequence GQPRRSTRPTQQFYQPPRARN.

Component of mRNA stress granules. Interacts with FMR1, FXR1, FXR2, EWSR1, FUS, SERBP1, EEF1A1 and DDX3X or DDX3Y, and with the small nuclear ribonucleoprotein-associated proteins SNRPB and SNRPN. Interacts with 'Lys-48'-linked tetra-ubiquitin, but not with monoubiquitin or 'Lys-63'-linked ubiquitin chains. May interact with the exon junction complex (EJC) composed at least of CASC3, EIF4A3, MAGOH and RBM8A. Interacts with POLR2A (via the C-terminal domain (CTD)). Probably cleaved by enteroviral 2A proteinase. In terms of tissue distribution, detected in heart, brain, placenta, lung, liver, skeletal muscle, kidney and pancreas.

It is found in the cytoplasm. Its subcellular location is the nucleus. In terms of biological role, scaffolding protein that specifically recognizes and binds dimethylarginine-containing proteins. Plays a role in the regulation of translation of target mRNAs by binding Arg/Gly-rich motifs (GAR) in dimethylarginine-containing proteins. In nucleus, acts as a coactivator: recognizes and binds asymmetric dimethylation on the core histone tails associated with transcriptional activation (H3R17me2a and H4R3me2a) and recruits proteins at these arginine-methylated loci. In cytoplasm, acts as an antiviral factor that participates in the assembly of stress granules together with G3BP1. In Homo sapiens (Human), this protein is Tudor domain-containing protein 3 (TDRD3).